The following is a 217-amino-acid chain: Small ribosomal subunit protein uS3 (217 aa).

A KH type-2 domain is found at 38-106; that stretch reads IRQLIQTKLA…QVHINIVEIK (69 aa).

It belongs to the universal ribosomal protein uS3 family. Part of the 30S ribosomal subunit. Forms a tight complex with proteins S10 and S14.

In terms of biological role, binds the lower part of the 30S subunit head. Binds mRNA in the 70S ribosome, positioning it for translation. The sequence is that of Small ribosomal subunit protein uS3 from Lactococcus lactis subsp. cremoris (strain MG1363).